The sequence spans 170 residues: Ribosomal RNA small subunit methyltransferase G (170 aa).

Residues glycine 70, leucine 75, 120–121, and arginine 138 contribute to the S-adenosyl-L-methionine site; that span reads AE.

This sequence belongs to the methyltransferase superfamily. RNA methyltransferase RsmG family.

Its subcellular location is the cytoplasm. Functionally, specifically methylates the N7 position of guanine in position 518 of 16S rRNA. This Mycobacterium ulcerans (strain Agy99) protein is Ribosomal RNA small subunit methyltransferase G.